Here is a 248-residue protein sequence, read N- to C-terminus: Triosephosphate isomerase (248 aa).

9–11 provides a ligand contact to substrate; sequence NWK. His-94 functions as the Electrophile in the catalytic mechanism. The active-site Proton acceptor is Glu-166. Substrate-binding positions include Gly-172, Ser-211, and 232–233; that span reads GG.

It belongs to the triosephosphate isomerase family. Homodimer.

Its subcellular location is the cytoplasm. The enzyme catalyses D-glyceraldehyde 3-phosphate = dihydroxyacetone phosphate. It participates in carbohydrate biosynthesis; gluconeogenesis. It functions in the pathway carbohydrate degradation; glycolysis; D-glyceraldehyde 3-phosphate from glycerone phosphate: step 1/1. Its function is as follows. Involved in the gluconeogenesis. Catalyzes stereospecifically the conversion of dihydroxyacetone phosphate (DHAP) to D-glyceraldehyde-3-phosphate (G3P). This chain is Triosephosphate isomerase, found in Ruthia magnifica subsp. Calyptogena magnifica.